Consider the following 359-residue polypeptide: Peptide chain release factor 1 (359 aa).

An N5-methylglutamine modification is found at Gln-232.

The protein belongs to the prokaryotic/mitochondrial release factor family. Post-translationally, methylated by PrmC. Methylation increases the termination efficiency of RF1.

Its subcellular location is the cytoplasm. Functionally, peptide chain release factor 1 directs the termination of translation in response to the peptide chain termination codons UAG and UAA. The protein is Peptide chain release factor 1 of Lawsonia intracellularis (strain PHE/MN1-00).